A 65-amino-acid polypeptide reads, in one-letter code: Large ribosomal subunit protein uL29 (65 aa).

This sequence belongs to the universal ribosomal protein uL29 family.

The protein is Large ribosomal subunit protein uL29 of Lactobacillus johnsonii (strain CNCM I-12250 / La1 / NCC 533).